Reading from the N-terminus, the 463-residue chain is Chromosomal replication initiator protein DnaA (463 aa).

Positions 1–83 are domain I, interacts with DnaA modulators; sequence MSLSLWQQCL…LRFEVGSKPI (83 aa). The tract at residues 83–126 is domain II; the sequence is IVPVAVSSAASSGASVPPAAVRASSLARPSWERVTAQPELSYRS. The tract at residues 127–343 is domain III, AAA+ region; it reads NVNPKHTFDN…GALNRVIANA (217 aa). Residues Gly171, Gly173, Lys174, and Thr175 each contribute to the ATP site. The segment at 344–463 is domain IV, binds dsDNA; sequence NFTGRAITID…FSNLIRTLSS (120 aa).

It belongs to the DnaA family. In terms of assembly, oligomerizes as a right-handed, spiral filament on DNA at oriC.

It is found in the cytoplasm. Functionally, plays an essential role in the initiation and regulation of chromosomal replication. ATP-DnaA binds to the origin of replication (oriC) to initiate formation of the DNA replication initiation complex once per cell cycle. Binds the DnaA box (a 9 base pair repeat at the origin) and separates the double-stranded (ds)DNA. Forms a right-handed helical filament on oriC DNA; dsDNA binds to the exterior of the filament while single-stranded (ss)DNA is stabiized in the filament's interior. The ATP-DnaA-oriC complex binds and stabilizes one strand of the AT-rich DNA unwinding element (DUE), permitting loading of DNA polymerase. After initiation quickly degrades to an ADP-DnaA complex that is not apt for DNA replication. Binds acidic phospholipids. This is Chromosomal replication initiator protein DnaA from Edwardsiella ictaluri (strain 93-146).